We begin with the raw amino-acid sequence, 1865 residues long: Endoribonuclease Dicer (1865 aa).

One can recognise a Helicase ATP-binding domain in the interval 41–213 (LLEAALEHNT…DLEEKIQNLE (173 aa)). 54–61 (LNTGSGKT) serves as a coordination point for ATP. Residues 161 to 164 (DECH) carry the DECH box motif. A disordered region spans residues 397–417 (SWSDSEDDDEDEEAEAKEKTE). The segment covering 400–411 (DSEDDDEDEEAE) has biased composition (acidic residues). The region spanning 419 to 588 (NFPSPFTNIL…SAECNDFELE (170 aa)) is the Helicase C-terminal domain. The Dicer dsRNA-binding fold domain occupies 616-708 (AIGHVNRYCA…MPVGKETVKY (93 aa)). Positions 713 to 732 (DLHDEEETSVPGRPGSTKRR) are disordered. One can recognise a PAZ domain in the interval 881 to 1028 (KFMEDIEKSE…LVPELCAIHP (148 aa)). Polar residues-rich tracts occupy residues 1111 to 1128 (GTSS…SMEV) and 1192 to 1201 (STQTTTSVSV). Disordered regions lie at residues 1111–1142 (GTSS…PDEK) and 1190–1259 (DLST…DCRS). Low complexity predominate over residues 1240-1252 (SETATSTPAPSET). In terms of domain architecture, RNase III 1 spans 1262 to 1385 (AGPAWDSPKT…TDKWDSDENK (124 aa)). Positions 1298, 1377, and 1380 each coordinate Mg(2+). The tract at residues 1373-1417 (KSSTDKWDSDENKDLANGKASDDEDEDDDDEPEEAEVEPSKEDVN) is disordered. The span at 1374 to 1388 (SSTDKWDSDENKDLA) shows a compositional bias: basic and acidic residues. Residues 1394–1409 (DDEDEDDDDEPEEAEV) are compositionally biased toward acidic residues. The RNase III 2 domain occupies 1609-1767 (FLNFESKINY…LAGAIYMDSG (159 aa)). Positions 1648, 1753, and 1756 each coordinate Mg(2+). The DRBM domain occupies 1792-1857 (VPRSPVRELL…ARRALRSLKA (66 aa)).

Belongs to the helicase family. Dicer subfamily. Component of the RISC loading complex (RLC), or micro-RNA (miRNA) loading complex (miRLC), which is composed of dicer1, ago2 and tarbp2; dicer1 and tarbp2 are required to process precursor miRNAs (pre-miRNAs) to mature miRNAs and then load them onto ago2. Note that the trimeric RLC/miRLC is also referred to as RISC. Requires Mg(2+) as cofactor. Mn(2+) is required as a cofactor.

The protein localises to the cytoplasm. The catalysed reaction is Endonucleolytic cleavage to 5'-phosphomonoester.. Double-stranded RNA (dsRNA) endoribonuclease playing a central role in short dsRNA-mediated post-transcriptional gene silencing. Cleaves naturally occurring long dsRNAs and short hairpin pre-microRNAs (miRNA) into fragments of twenty-one to twenty-three nucleotides with 3' overhang of two nucleotides, producing respectively short interfering RNAs (siRNA) and mature microRNAs. SiRNAs and miRNAs serve as guide to direct the RNA-induced silencing complex (RISC) to complementary RNAs to degrade them or prevent their translation. Gene silencing mediated by siRNAs, also called RNA interference, controls the elimination of transcripts from mobile and repetitive DNA elements of the genome but also the degradation of exogenous RNA of viral origin for instance. The miRNA pathway on the other side is a mean to specifically regulate the expression of target genes. The polypeptide is Endoribonuclease Dicer (dicer1) (Danio rerio (Zebrafish)).